We begin with the raw amino-acid sequence, 304 residues long: L-threonate dehydrogenase (304 aa).

Residues 7–35 and Thr102 contribute to the NAD(+) site; that span reads YAVA…TYGV. Residue Lys178 is part of the active site. Lys246 contacts NAD(+).

Belongs to the HIBADH-related family. L-threonate dehydrogenase subfamily.

It carries out the reaction L-threonate + NAD(+) = 2-dehydro-L-erythronate + NADH + H(+). Its function is as follows. Catalyzes oxidation of L-threonate to 2-oxo-tetronate. Can use either NAD(+) or NADP(+) as cosubstrate, with a preference for NAD(+). This is L-threonate dehydrogenase from Pectobacterium atrosepticum (strain SCRI 1043 / ATCC BAA-672) (Erwinia carotovora subsp. atroseptica).